A 211-amino-acid chain; its full sequence is Thiamine-phosphate synthase (211 aa).

Residues 38-42 and N70 each bind 4-amino-2-methyl-5-(diphosphooxymethyl)pyrimidine; that span reads QLREK. Mg(2+)-binding residues include D71 and D90. S109 contributes to the 4-amino-2-methyl-5-(diphosphooxymethyl)pyrimidine binding site. 135–137 provides a ligand contact to 2-[(2R,5Z)-2-carboxy-4-methylthiazol-5(2H)-ylidene]ethyl phosphate; that stretch reads TST. K138 is a binding site for 4-amino-2-methyl-5-(diphosphooxymethyl)pyrimidine. 2-[(2R,5Z)-2-carboxy-4-methylthiazol-5(2H)-ylidene]ethyl phosphate-binding positions include G165 and 185 to 186; that span reads IS.

Belongs to the thiamine-phosphate synthase family. Requires Mg(2+) as cofactor.

The catalysed reaction is 2-[(2R,5Z)-2-carboxy-4-methylthiazol-5(2H)-ylidene]ethyl phosphate + 4-amino-2-methyl-5-(diphosphooxymethyl)pyrimidine + 2 H(+) = thiamine phosphate + CO2 + diphosphate. The enzyme catalyses 2-(2-carboxy-4-methylthiazol-5-yl)ethyl phosphate + 4-amino-2-methyl-5-(diphosphooxymethyl)pyrimidine + 2 H(+) = thiamine phosphate + CO2 + diphosphate. It catalyses the reaction 4-methyl-5-(2-phosphooxyethyl)-thiazole + 4-amino-2-methyl-5-(diphosphooxymethyl)pyrimidine + H(+) = thiamine phosphate + diphosphate. It participates in cofactor biosynthesis; thiamine diphosphate biosynthesis; thiamine phosphate from 4-amino-2-methyl-5-diphosphomethylpyrimidine and 4-methyl-5-(2-phosphoethyl)-thiazole: step 1/1. Its function is as follows. Condenses 4-methyl-5-(beta-hydroxyethyl)thiazole monophosphate (THZ-P) and 2-methyl-4-amino-5-hydroxymethyl pyrimidine pyrophosphate (HMP-PP) to form thiamine monophosphate (TMP). The chain is Thiamine-phosphate synthase from Clostridium acetobutylicum (strain ATCC 824 / DSM 792 / JCM 1419 / IAM 19013 / LMG 5710 / NBRC 13948 / NRRL B-527 / VKM B-1787 / 2291 / W).